Here is a 54-residue protein sequence, read N- to C-terminus: MKIFFAILLILAVCSMAIWTVNGTPFAIKCATDADCSRKCPGNPPCRNGFCACT.

A signal peptide spans 1-23 (MKIFFAILLILAVCSMAIWTVNG). 3 cysteine pairs are disulfide-bonded: C30–C46, C36–C51, and C40–C53.

It belongs to the short scorpion toxin superfamily. Potassium channel inhibitor family. Alpha-KTx 14 subfamily. As to expression, expressed by the venom gland.

The protein resides in the secreted. In terms of biological role, inhibits potassium channels. May be active towards small conductance calcium-activated potassium channels (KCNN, SK), and less active towards voltage-gated potassium channels (Kv/KCN). In Olivierus martensii (Manchurian scorpion), this protein is Potassium channel toxin alpha-KTx 14.2.